The following is a 765-amino-acid chain: Transcription factor RFX3 (765 aa).

Positions 189–264 (HLQWLLDNYE…YHYYGIRVKP (76 aa)) form a DNA-binding region, RFX-type winged-helix.

The protein belongs to the RFX family.

The protein localises to the nucleus. Its function is as follows. Transcription factor required for ciliogenesis and islet cell differentiation during endocrine pancreas development. The polypeptide is Transcription factor RFX3 (rfx3) (Danio rerio (Zebrafish)).